We begin with the raw amino-acid sequence, 196 residues long: ATP-dependent Clp protease proteolytic subunit (196 aa).

The active-site Nucleophile is the S98. H123 is an active-site residue.

This sequence belongs to the peptidase S14 family. In terms of assembly, fourteen ClpP subunits assemble into 2 heptameric rings which stack back to back to give a disk-like structure with a central cavity, resembling the structure of eukaryotic proteasomes.

Its subcellular location is the cytoplasm. It catalyses the reaction Hydrolysis of proteins to small peptides in the presence of ATP and magnesium. alpha-casein is the usual test substrate. In the absence of ATP, only oligopeptides shorter than five residues are hydrolyzed (such as succinyl-Leu-Tyr-|-NHMec, and Leu-Tyr-Leu-|-Tyr-Trp, in which cleavage of the -Tyr-|-Leu- and -Tyr-|-Trp bonds also occurs).. In terms of biological role, cleaves peptides in various proteins in a process that requires ATP hydrolysis. Has a chymotrypsin-like activity. Plays a major role in the degradation of misfolded proteins. The polypeptide is ATP-dependent Clp protease proteolytic subunit (Anoxybacillus flavithermus (strain DSM 21510 / WK1)).